The following is a 178-amino-acid chain: ATP synthase subunit delta (178 aa).

This sequence belongs to the ATPase delta chain family. F-type ATPases have 2 components, F(1) - the catalytic core - and F(0) - the membrane proton channel. F(1) has five subunits: alpha(3), beta(3), gamma(1), delta(1), epsilon(1). F(0) has three main subunits: a(1), b(2) and c(10-14). The alpha and beta chains form an alternating ring which encloses part of the gamma chain. F(1) is attached to F(0) by a central stalk formed by the gamma and epsilon chains, while a peripheral stalk is formed by the delta and b chains.

The protein localises to the cell inner membrane. F(1)F(0) ATP synthase produces ATP from ADP in the presence of a proton or sodium gradient. F-type ATPases consist of two structural domains, F(1) containing the extramembraneous catalytic core and F(0) containing the membrane proton channel, linked together by a central stalk and a peripheral stalk. During catalysis, ATP synthesis in the catalytic domain of F(1) is coupled via a rotary mechanism of the central stalk subunits to proton translocation. Functionally, this protein is part of the stalk that links CF(0) to CF(1). It either transmits conformational changes from CF(0) to CF(1) or is implicated in proton conduction. The protein is ATP synthase subunit delta of Pseudomonas syringae pv. tomato (strain ATCC BAA-871 / DC3000).